A 2050-amino-acid polypeptide reads, in one-letter code: MFNLMKKDKDKDGGRKEKKEKKEKKERMSAAELRSLEEMSMRRGFFNLNRSSKRESKTRLEISNPIPIKVASGSDLHLTDIDSDSNRGSIILDSGHLSTASSSDDLKGEEGSFRGSVLQRAAKFGSLAKQNSQMIVKRFSFSQRSRDESASETSTPSEHSAAPSPQVEVRTLEGQLMQHPGLGIPRPGPRSRVPELVTKRFPADLRLPALVPPPPPALRELELQRRPTGDFGFSLRRTTMLDRAPEGQAYRRVVHFAEPGAGTKDLALGLVPGDRLVEINGQNVENKSRDEIVEMIRQSGDSVRLKVQPIPELSELSRSWLRTGEGHRREPADAKTEEQIAAEEAWYETEKVWLVHRDGFSLASQLKSEELSLPEGKARVKLDHDGAILDVDEDDIEKANAPSCDRLEDLASLVYLNESSVLHTLRQRYGASLLHTYAGPSLLVLSTRGAPAVYSEKVMHMFKGCRREDMAPHIYAVAQTAYRAMLMSRQDQSIVLLGSSGSGKTTSFQHLVQYLATIAGTSGTKVFSVEKWQALSTLLEAFGNSPTIMNGSATRFSQILSLDFDQAGQVASASIQTMLLEKLRVARRPASEATFNVFYYLLACGDATLRTELHLNHLAENNVFGIVPLSKPEEKQKAAQQFSKLQAAMKVLAISPEEQKTCWLILASIYHLGAAGATKEAAEAGRKQFARHEWAQKAAYLLGCSLEELSSAIFKHQLKGGTLQRSTSFRQGPEESGLGEGTKLSALECLEGMASGLYSELFTLLISLVNRALKSSQHSLCSMMIVDTPGFQNPEWGGSARGASFEELCHNYAQDRLQRLFHERTFLQELERYKEDNIELAFDDLEPVADDSVAAVDQASHLVRSLAHADEARGLLWLLEEEALVPGATEDALLDRLFSYYGPQEGDKKGQSPLLRSSKPRHFLLGHSHGTNWVEYNVAGWLNYTKQNPATQNAPRLLQDSQKKIISNLFLGRAGSATVLSGSIAGLEGGSQLALRRATSMRKTFTTGMAAVKKKSLCIQIKLQVDALIDTIKRSKMHFVHCFLPVAEGWPGEPRSASSRRVSSSSELDLPPGDPCEAGLLQLDVSLLRAQLRGSRLLDAMRMYRQGYPDHMVFSEFRRRFDVLAPHLTKKHGRNYIVVDEKRAVEELLESLDLEKSSCCLGLSRVFFRAGTLARLEEQRDEQTSRHLTLFQAACRGYLARQHFKKRKIQDLAIRCVQKNIKKNKGVKDWPWWKLFTTVRPLIQVQLSEEQIRNKDEEIQQLRSKLEKVEKERNELRLSSDRLETRISELTSELTDERNTGESASQLLDAETAERLRTEKEMKELQTQYDALKKQMEVMEMEVMEARLIRAAEINGEVDDDDAGGEWRLKYERAVREVDFTKKRLQQELEDKMEVEQQSRRQLERRLGDLQADSDESQRALQQLKKKCQRLTAELQDTKLHLEGQQVRNHELEKKQRRFDSELSQAHEETQREKLQREKLQREKDMLLAEAFSLKQQMEEKDLDIAGFTQKVVSLEAELQDISSQESKDEASLAKVKKQLRDLEAKVKDQEEELDEQAGSIQMLEQAKLRLEMEMERMRQTHSKEMESRDEEVEEARQSCQKKLKQMEVQLEEEYEDKQKALREKRELESKLSTLSDQVNQRDFESEKRLRKDLKRTKALLADAQIMLDHLKNNAPSKREIAQLKNQLEESEFTCAAAVKARKAMEVEMEDLHLQIDDIAKAKTALEEQLSRLQREKNEIQNRLEEDQEDMNELMKKHKAAVAQASRDMAQMNDLQAQIEESNKEKQELQEKLQALQSQVEFLEQSMVDKSLVSRQEAKIRELETRLEFEKTQVKRLENLASRLKETMEKLTEERDQRAAAENREKEQNKRLQRQLRDTKEEMSELARKEAEASRKKHELEMDLESLEAANQSLQADLKLAFKRIGDLQAAIEDEMESDENEDLINSLQDMVTKYQKKKNKLEGDSDVDSELEDRVDGVKSWLSKNKGPSKAPSDDGSLKSSSPTSHWKPLAPDPSDDEHDPVDSISRPRFSHSYLSDSDTEAKLTETSA.

Composition is skewed to basic and acidic residues over residues 1 to 17 (MFNL…GRKE) and 23 to 34 (EKKERMSAAELR). A disordered region spans residues 1-34 (MFNLMKKDKDKDGGRKEKKEKKEKKERMSAAELR). Residues 1–398 (MFNLMKKDKD…LDVDEDDIEK (398 aa)) are mediates nucleotide-independent binding to F-actin and interaction with GOLPH3. Phosphoserine is present on residues serine 35, serine 52, serine 72, and serine 74. Position 79 is a phosphothreonine (threonine 79). Residues serine 83 and serine 98 each carry the phosphoserine modification. Threonine 99 carries the post-translational modification Phosphothreonine. Phosphoserine is present on residues serine 102 and serine 103. Residues 114 to 118 (RGSVL) carry the Interaction with actin motif. Serine 140, serine 145, serine 157, serine 160, serine 164, serine 234, and isoleucine 340 each carry phosphoserine. A disordered region spans residues 140–167 (SFSQRSRDESASETSTPSEHSAAPSPQV). Residues 220 to 311 (ELELQRRPTG…SVRLKVQPIP (92 aa)) form the PDZ domain. Residues 349-401 (TEKVWLVHRDGFSLASQLKSEELSLPEGKARVKLDHDGAILDVDEDDIEKANA) enclose the Myosin N-terminal SH3-like domain. The Myosin motor domain occupies 405–1181 (DRLEDLASLV…TLARLEEQRD (777 aa)). 498 to 505 (GSSGSGKT) lines the ATP pocket. Residues serine 983, serine 1063, serine 1064, and serine 1066 each carry the phosphoserine modification. The segment at 1051-1071 (PGEPRSASSRRVSSSSELDLP) is disordered. Positions 1055-1066 (RSASSRRVSSSS) are enriched in low complexity. The IQ domain occupies 1184 to 1213 (TSRHLTLFQAACRGYLARQHFKKRKIQDLA). Residues 1242–1967 (LIQVQLSEEQ…KKNKLEGDSD (726 aa)) are a coiled coil. A disordered region spans residues 1448–1477 (RNHELEKKQRRFDSELSQAHEETQREKLQR). Position 1636 is a phosphoserine (serine 1636). A disordered region spans residues 1848–1897 (MEKLTEERDQRAAAENREKEQNKRLQRQLRDTKEEMSELARKEAEASRKK). Residues serine 1938, serine 1966, serine 1970, serine 1994, serine 1998, serine 2002, serine 2003, serine 2016, serine 2032, serine 2037, and serine 2039 each carry the phosphoserine modification. The segment at 1955–2050 (YQKKKNKLEG…TEAKLTETSA (96 aa)) is disordered. Threonine 2041 is modified (phosphothreonine). Residues 2041 to 2050 (TEAKLTETSA) show a composition bias toward basic and acidic residues.

The protein belongs to the TRAFAC class myosin-kinesin ATPase superfamily. Myosin family. In terms of assembly, homodimer. Forms a tripartite complex with CDC42BPA/CDC42BPB and LURAP1 with the latter acting as an adapter connecting CDC42BPA/CDC42BPB and MYO18A. Binds F-actin; regulated by ADP and GOLPH3. Interacts with GOLPH3; the interaction is direct and may link Golgi membranes to the actin cytoskeleton. Interacts with JAK3. Interacts with MSR1 and CD14. Post-translationally, phosphorylated on tyrosine upon CSF1R activation. Isoform 6 is phosphorylated on Ser-340. Isoform 1; Expressed ubiquitously. Isoform 2: Specifically expressed in most hematopoietic cells. Isoform 3: Predominantly expressed in alveolar macrophages.

It localises to the golgi apparatus. The protein resides in the trans-Golgi network. Its subcellular location is the golgi outpost. The protein localises to the cytoplasm. It is found in the cytoskeleton. It localises to the microtubule organizing center. The protein resides in the endoplasmic reticulum-Golgi intermediate compartment. May link Golgi membranes to the cytoskeleton and participate in the tensile force required for vesicle budding from the Golgi. Thereby, may play a role in Golgi membrane trafficking and could indirectly give its flattened shape to the Golgi apparatus. Alternatively, in concert with LURAP1 and CDC42BPA/CDC42BPB, has been involved in modulating lamellar actomyosin retrograde flow that is crucial to cell protrusion and migration. May be involved in the maintenance of the stromal cell architectures required for cell to cell contact. Regulates trafficking, expression, and activation of innate immune receptors on macrophages. Plays a role to suppress inflammatory responsiveness of macrophages via a mechanism that modulates CD14 trafficking. Acts as a receptor of surfactant-associated protein A (SFTPA1/SP-A) and plays an important role in internalization and clearance of SFTPA1-opsonized S.aureus by alveolar macrophages. Strongly enhances natural killer cell cytotoxicity. This is Unconventional myosin-XVIIIa (Myo18a) from Mus musculus (Mouse).